A 438-amino-acid polypeptide reads, in one-letter code: Alpha-methylserine aldolase (438 aa).

At Lys-252 the chain carries N6-(pyridoxal phosphate)lysine.

It belongs to the SHMT family. Alpha-methylserine aldolase subfamily. Homodimer. The cofactor is pyridoxal 5'-phosphate.

It carries out the reaction 2-methyl-L-serine = formaldehyde + L-alanine. Its activity is regulated as follows. In the alpha-methyl-L-serine synthesis reaction, activity is inhibited by an excess amount of formaldehyde (at a concentration greater than 10 mM). Catalyzes the reversible interconversion of alpha-methyl-L-serine to L-alanine and formaldehyde. Cannot use alpha-methyl-D-serine, L-serine or D-serine. Cannot use D-alanine instead of L-alanine as the substrate for alpha-methyl-L-serine synthesis. Does not require tetrahydrofolate (THF) for activity. This Ralstonia sp protein is Alpha-methylserine aldolase.